Here is a 511-residue protein sequence, read N- to C-terminus: MHTEKDPNKNTPEQQTPISLNDQMQRRLEERQQLMEAGVNPYPTHFEVTHSSGEIIANFVEEAKTPVSVAGRIMTIRKMGKASFFHLQDSAGRIQIYMKKDEVGDATYDTFKLLDIGDIIGIKGFTFKTRTGEISVHAESLELLTKSLRPIPVAKEKEVDGEKVVFDAFSDKELRYRQRYVDLIVNPEVKETFIKRSAIVSFMRNAFTGKGWLEVETPILQPIYGGAAARPFTTHHNALDMQLYLRIANELYLKRLIVGGFDGVFEFAKDFRNEGIDRFHNPEFTQVELYVAYKDYNWMMEMVEELFSQTALAVNKSEVTTFLGNEISLKPPFRRLSIIDAITEYTGQNIAGQSEEQLRYTAKDLGLELDPKISSGKIIDEIFGEFVEPKLIQPTFIIDYPTEMSPLAKEHPSQPGIVERFELIIGGKEVCNSFSELNDPVIQRERLESQAKLRQRGDEEAMIVDEDFLRAIEYGMPPCAGIGIGIDRLVMILTGQDSIREVIFFPHLKPE.

The disordered stretch occupies residues 1–21 (MHTEKDPNKNTPEQQTPISLN). A compositionally biased stretch (polar residues) spans 9–21 (KNTPEQQTPISLN). Mg(2+) is bound by residues glutamate 422 and glutamate 429.

Belongs to the class-II aminoacyl-tRNA synthetase family. Homodimer. Mg(2+) is required as a cofactor.

It localises to the cytoplasm. It catalyses the reaction tRNA(Lys) + L-lysine + ATP = L-lysyl-tRNA(Lys) + AMP + diphosphate. This chain is Lysine--tRNA ligase, found in Pelodictyon phaeoclathratiforme (strain DSM 5477 / BU-1).